Consider the following 253-residue polypeptide: MSLALEQATLIQENLPQGNSLPRHIAIIMDGNRRWQRKHEQFCQKRAISGHRQGADSIPQIVDTALHLGVEALTLFAFSTENFSRSKSEVAELFSLFNSQLRSKLSFLHDREIRLRCIGDLSKLPQELQNNIEQASSATAHYSRMELIFAINYGSKDELVRAFKELHQDLASKKISVNDISEELISSYLDTSGLPDPDLLIRTGGEMRVSNFLLWQIAYTELYVTDVLWPDFTANDLLEAIKTYQQRSRRGGK.

The active site involves Asp-30. Mg(2+) is bound at residue Asp-30. Substrate contacts are provided by residues 31–34 (GNRR), Trp-35, His-51, and 79–81 (STE). The active-site Proton acceptor is Asn-82. Substrate-binding positions include Phe-83, Arg-85, Arg-202, and 208-210 (RVS). Glu-221 contacts Mg(2+).

The protein belongs to the UPP synthase family. As to quaternary structure, homodimer. Mg(2+) serves as cofactor.

Its function is as follows. Catalyzes the condensation of isopentenyl diphosphate (IPP) with allylic pyrophosphates generating different type of terpenoids. The sequence is that of Isoprenyl transferase from Chlamydia trachomatis serovar D (strain ATCC VR-885 / DSM 19411 / UW-3/Cx).